A 261-amino-acid polypeptide reads, in one-letter code: uncharacterized protein (261 aa).

The first 20 residues, 1 to 20 (MKIQVMLIIIFVGIFTICLA), serve as a signal peptide directing secretion. 2 N-linked (GlcNAc...) asparagine; by host glycosylation sites follow: Asn22 and Asn27.

The protein localises to the secreted. This is an uncharacterized protein from Acanthamoeba polyphaga (Amoeba).